The chain runs to 529 residues: Ribonuclease Y (529 aa).

A helical transmembrane segment spans residues 4–24 (GLIYISLEVLVACLITALIMY). The KH domain occupies 216–297 (LTSRIALPCS…NRIEEVYHRV (82 aa)). One can recognise an HD domain in the interval 342-435 (ALQHSKEVAL…VCAADALSAG (94 aa)).

It belongs to the RNase Y family.

The protein resides in the cell membrane. Endoribonuclease that initiates mRNA decay. In Helicobacter pylori (strain J99 / ATCC 700824) (Campylobacter pylori J99), this protein is Ribonuclease Y.